Here is a 602-residue protein sequence, read N- to C-terminus: Sodium- and chloride-dependent GABA transporter 2 (602 aa).

Over residues 1–13 the composition is skewed to polar residues; it reads MDSRVSGTTSNGE. A disordered region spans residues 1–22; that stretch reads MDSRVSGTTSNGETKPVYPVME. Over 1 to 40 the chain is Cytoplasmic; the sequence is MDSRVSGTTSNGETKPVYPVMEKKEEDGTLERGHWNNKME. 3 helical membrane-spanning segments follow: residues 41-61, 68-88, and 121-141; these read FVLS…FPYL, GAFF…VFLL, and IVIL…FYLF. Topologically, residues 142–206 are extracellular; sequence SSFTIDLPWG…GIQHLGALRW (65 aa). The cysteines at positions 153 and 162 are disulfide-linked. Residue Asn-173 is glycosylated (N-linked (GlcNAc...) asparagine). 2 consecutive transmembrane segments (helical) span residues 207–227 and 233–253; these read ELAL…WKGV and VVYF…IRGV. A glycan (N-linked (GlcNAc...) asparagine) is linked at Asn-269. 7 helical membrane passes run 282–302, 319–339, 366–386, 418–438, 453–473, 490–510, and 528–548; these read AGTQ…ALGS, FLNS…LGFM, VVML…VVLL, VLIL…LTEG, GMCL…VYGA, PLIK…TFLF, and WWGD…IPAW. Over 549-602 the chain is Cytoplasmic; it reads SLYRLGTLKGPFRERIRQLMCPAEDLPQRNPAGPSAPATPRTSLLRLTELESHC. At Thr-587 the chain carries Phosphothreonine. A Phosphoserine modification is found at Ser-591.

It belongs to the sodium:neurotransmitter symporter (SNF) (TC 2.A.22) family. SLC6A13 subfamily. As to expression, expressed in brain, kidney, lung, liver and testis.

It is found in the cell membrane. The protein resides in the basolateral cell membrane. The catalysed reaction is 4-aminobutanoate(out) + chloride(out) + 2 Na(+)(out) = 4-aminobutanoate(in) + chloride(in) + 2 Na(+)(in). It catalyses the reaction taurine(out) + chloride(out) + 2 Na(+)(out) = taurine(in) + chloride(in) + 2 Na(+)(in). It carries out the reaction beta-alanine(out) + chloride(out) + 2 Na(+)(out) = beta-alanine(in) + chloride(in) + 2 Na(+)(in). The enzyme catalyses hypotaurine(out) + chloride(out) + 2 Na(+)(out) = hypotaurine(in) + chloride(in) + 2 Na(+)(in). GABA transport is inhibited by beta-alanine, 2,3-diaminopropionic acid and SNAP-5114. Mediates sodium- and chloride-dependent transport of gamma-aminobutyric acid (GABA). Mediates transport of beta-alanine. Can also mediate transport of taurine and hypotaurine. In Homo sapiens (Human), this protein is Sodium- and chloride-dependent GABA transporter 2 (SLC6A13).